A 376-amino-acid polypeptide reads, in one-letter code: Lactosylceramide 1,3-N-acetyl-beta-D-glucosaminyltransferase (376 aa).

Residues 1-13 (MRLFVSRRVKRWK) lie on the Cytoplasmic side of the membrane. A helical; Signal-anchor for type II membrane protein membrane pass occupies residues 14–34 (IFHFFVTCFILSFMVFWSPIN). Over 35 to 376 (NYIMSHMKSY…NSYPCWAAFA (342 aa)) the chain is Lumenal. The N-linked (GlcNAc...) asparagine glycan is linked to N57.

Belongs to the glycosyltransferase 31 family. In terms of tissue distribution, highly expressed in adult spleen, placenta and cerebellar Purkinje cells where it colocalizes with HNK-1. Expressed at lower level in brain, lung, thymus and muscle.

The protein resides in the golgi apparatus membrane. It catalyses the reaction a beta-D-Gal-(1-&gt;4)-beta-D-Glc-(1&lt;-&gt;1)-Cer(d18:1(4E)) + UDP-N-acetyl-alpha-D-glucosamine = a beta-D-GlcNAc-(1-&gt;3)-beta-D-Gal-(1-&gt;4)-beta-D-Glc-(1&lt;-&gt;1)-Cer(d18:1(4E)) + UDP + H(+). The catalysed reaction is a neolactoside nLc4Cer(d18:1(4E)) + UDP-N-acetyl-alpha-D-glucosamine = a neolactoside IV(3)-beta-GlcNAc-nLc4Cer(d18:1(4E)) + UDP + H(+). Its pathway is protein modification; protein glycosylation. In terms of biological role, beta-1,3-N-acetylglucosaminyltransferase that plays a key role in the synthesis of lacto- or neolacto-series carbohydrate chains on glycolipids, notably by participating in biosynthesis of HNK-1 and Lewis X carbohydrate structures. Has strong activity toward lactosylceramide (LacCer) and neolactotetraosylceramide (nLc(4)Cer; paragloboside), resulting in the synthesis of Lc(3)Cer and neolactopentaosylceramide (nLc(5)Cer), respectively. Plays a central role in regulating neolacto-series glycolipid synthesis during embryonic development. This chain is Lactosylceramide 1,3-N-acetyl-beta-D-glucosaminyltransferase, found in Mus musculus (Mouse).